Here is an 877-residue protein sequence, read N- to C-terminus: Kinetochore null protein 2 (877 aa).

Residues 20–107 (IRLNLWSMKF…SNGIPENWAD (88 aa)) form the SANTA domain. Disordered regions lie at residues 122-315 (RPIQ…SKSV), 338-535 (FEST…ESLN), and 549-604 (MMFG…NDSI). Residues 153-211 (QKNSENEKERNRREREEQQTKERERRLEEEKQRRDAEAEAERRRKEEEELEEANYTLRA) are a coiled coil. The span at 156 to 199 (SENEKERNRREREEQQTKERERRLEEEKQRRDAEAEAERRRKEE) shows a compositional bias: basic and acidic residues. Positions 251–279 (IASSTPQQKQRLADGANNQIPPTQKSQDS) are enriched in polar residues. Basic and acidic residues-rich tracts occupy residues 359 to 385 (EPRH…DNSR), 394 to 444 (RRHE…RGRD), and 453 to 480 (VRFE…DYGR). Positions 491-549 (EDEEKLNAIVRREKELRNRLQKSQKASSSSYRHRSNSSDAEESLNEWDIENQELLDNSM) form a coiled coil. The segment covering 511–520 (QKSQKASSSS) has biased composition (low complexity). Polar residues predominate over residues 573–583 (RSKPANSTKSP). Residues 592–601 (ASLEDNRDLN) show a composition bias toward basic and acidic residues. The Myb-like domain occupies 617-678 (VAKKITWRKQ…AITRLKWVEP (62 aa)). Disordered regions lie at residues 757 to 785 (RGGT…FNSP) and 808 to 877 (MQAR…TSIY). Polar residues-rich tracts occupy residues 775–785 (SRGNNSTFNSP) and 819–836 (SSSM…TSIS). The span at 856-871 (EDDENEDNDDDDDMRE) shows a compositional bias: acidic residues.

This sequence belongs to the KNL2 family. Interacts with hcp-3.

It localises to the nucleus. Its subcellular location is the chromosome. It is found in the centromere. The protein resides in the kinetochore. Its function is as follows. Required for the recruitment of hcp-3, hcp-4, knl-1, bub-1 and lin-53 to kinetochores, kinetochore assembly, chromosome condensation and chromosome segregation in meiosis and mitosis. In Caenorhabditis elegans, this protein is Kinetochore null protein 2.